A 254-amino-acid chain; its full sequence is Fluoride-specific ion channel FluC 1 (254 aa).

3 helical membrane passes run 19-39, 51-71, and 80-100; these read LDILVANVVACFLLGTVTALY, IIGMGMMGGVSTFSSFAYGSV, and AFLIAAAYVTVSVVAGYVAVL. Residues Gly-58 and Ser-61 each coordinate Na(+).

It belongs to the fluoride channel Fluc/FEX (TC 1.A.43) family.

The protein localises to the cell inner membrane. The catalysed reaction is fluoride(in) = fluoride(out). With respect to regulation, na(+) is not transported, but it plays an essential structural role and its presence is essential for fluoride channel function. In terms of biological role, fluoride-specific ion channel. Important for reducing fluoride concentration in the cell, thus reducing its toxicity. The polypeptide is Fluoride-specific ion channel FluC 1 (Brucella suis biovar 1 (strain 1330)).